The sequence spans 271 residues: MRLYRDNAVVLRQHKLGEADRIVTLLTRQHGLVRAVAKGVRRTKSKFGARLEPFAHIDVQLYPGRNLDIVTQVQTVDAFATDIVDDYTRYTTACAILETAERLAGEERAPALQLHRLTVGALRAVAEHHRPCELILDAFLLRAMGFAGWAPALDDCARCSAPGPHRAFHVAAGGAVCVQCRPPGAATPSPGVLDLMDALFRGDWASTEQVPEWLRGQASGLVAAHLQWHLERQLRTLPLIERARPHAAVGVEDSVRQDGDRDSTTRTPSSA.

The interval 248–271 (AVGVEDSVRQDGDRDSTTRTPSSA) is disordered. Positions 253 to 264 (DSVRQDGDRDST) are enriched in basic and acidic residues.

Belongs to the RecO family.

Functionally, involved in DNA repair and RecF pathway recombination. The chain is DNA repair protein RecO from Rhodococcus opacus (strain B4).